We begin with the raw amino-acid sequence, 110 residues long: V-type proton ATPase subunit G1 (110 aa).

Methionine 1 is subject to N-acetylmethionine. A disordered region spans residues 60–80; sequence KLEETSGDSGANVKRLEQETD.

Belongs to the V-ATPase G subunit family. V-ATPase is a heteromultimeric enzyme composed of a peripheral catalytic V1 complex (components A to H) attached to an integral membrane V0 proton pore complex (components: a, c, c'', d and e).

It is found in the cell membrane. Its subcellular location is the vacuole membrane. Its function is as follows. Catalytic subunit of the peripheral V1 complex of vacuolar ATPase (V-ATPase). V-ATPase is responsible for acidifying a variety of intracellular compartments in eukaryotic cells. The polypeptide is V-type proton ATPase subunit G1 (VHA-G1) (Arabidopsis thaliana (Mouse-ear cress)).